The following is a 273-amino-acid chain: NADPH-dependent 7-cyano-7-deazaguanine reductase (273 aa).

81–83 (VES) is a substrate binding site. An NADPH-binding site is contributed by 83–84 (SK). Catalysis depends on C179, which acts as the Thioimide intermediate. D186 functions as the Proton donor in the catalytic mechanism. 218–219 (AE) contacts substrate. 247 to 248 (RG) contacts NADPH.

The protein belongs to the GTP cyclohydrolase I family. QueF type 2 subfamily. In terms of assembly, homodimer.

It localises to the cytoplasm. It catalyses the reaction 7-aminomethyl-7-carbaguanine + 2 NADP(+) = 7-cyano-7-deazaguanine + 2 NADPH + 3 H(+). Its pathway is tRNA modification; tRNA-queuosine biosynthesis. Catalyzes the NADPH-dependent reduction of 7-cyano-7-deazaguanine (preQ0) to 7-aminomethyl-7-deazaguanine (preQ1). The polypeptide is NADPH-dependent 7-cyano-7-deazaguanine reductase (Rickettsia felis (strain ATCC VR-1525 / URRWXCal2) (Rickettsia azadi)).